Here is a 352-residue protein sequence, read N- to C-terminus: Endophilin-A1 (352 aa).

Residues methionine 1–valine 21 are membrane-binding amphipathic helix. The tract at residues methionine 1–threonine 27 is disordered. The tract at residues methionine 1 to serine 125 is binds and tubulates liposomes. Residues serine 18–serine 249 form the BAR domain. Positions proline 60–proline 87 are required for dimerization upon membrane association. Positions glutamate 181–serine 248 form a coiled coil. The segment covering arginine 245 to proline 257 has biased composition (basic and acidic residues). The segment at arginine 245–glutamine 289 is disordered. Phosphoserine is present on serine 262. The segment covering glycine 268 to proline 283 has biased composition (polar residues). An SH3 domain is found at methionine 290–alanine 349. Tyrosine 299 carries the phosphotyrosine modification.

It belongs to the endophilin family. Monomer; in cytoplasm. Homodimer; when associated with membranes. Interacts with OPHN1. Interacts with SYNJ1. Interacts with DNM1. Interacts with MAP4K3; the interaction appears to regulate MAP4K3-mediated JNK activation. Interacts with PDCD6IP. Interacts with ATXN2. Interacts with ADAM9 and ADAM15 cytoplasmic tails. Interacts with BIN2. Interacts with TMEM108. Interacts with ADGRB2. As to expression, brain, mostly in frontal cortex. Expressed at high level in fetal cerebellum.

The protein localises to the cytoplasm. It localises to the membrane. Its subcellular location is the early endosome. It is found in the presynapse. Its function is as follows. Implicated in synaptic vesicle endocytosis. May recruit other proteins to membranes with high curvature. Required for BDNF-dependent dendrite outgrowth. Cooperates with SH3GL2 to mediate BDNF-NTRK2 early endocytic trafficking and signaling from early endosomes. The polypeptide is Endophilin-A1 (SH3GL2) (Homo sapiens (Human)).